A 62-amino-acid polypeptide reads, in one-letter code: Conotoxin reg3.7 (62 aa).

The first 15 residues, 1 to 15, serve as a signal peptide directing secretion; sequence RVLLTICLLLFPLSA. The propeptide occupies 16–45; that stretch reads LPLDGDQPADQPARHMQSAERNPRFDPVKR. The segment at 17-37 is disordered; sequence PLDGDQPADQPARHMQSAERN. Disulfide bonds link Cys-46–Cys-60, Cys-47–Cys-58, and Cys-52–Cys-61. Cys-61 carries the post-translational modification Cysteine amide.

It belongs to the conotoxin M superfamily. In terms of tissue distribution, expressed by the venom duct.

It is found in the secreted. In Conus regius (Crown cone), this protein is Conotoxin reg3.7.